Here is a 469-residue protein sequence, read N- to C-terminus: 3-isopropylmalate dehydratase large subunit (469 aa).

[4Fe-4S] cluster-binding residues include C347, C410, and C413.

It belongs to the aconitase/IPM isomerase family. LeuC type 1 subfamily. Heterodimer of LeuC and LeuD. It depends on [4Fe-4S] cluster as a cofactor.

The enzyme catalyses (2R,3S)-3-isopropylmalate = (2S)-2-isopropylmalate. It functions in the pathway amino-acid biosynthesis; L-leucine biosynthesis; L-leucine from 3-methyl-2-oxobutanoate: step 2/4. In terms of biological role, catalyzes the isomerization between 2-isopropylmalate and 3-isopropylmalate, via the formation of 2-isopropylmaleate. The sequence is that of 3-isopropylmalate dehydratase large subunit from Polynucleobacter necessarius subsp. necessarius (strain STIR1).